The primary structure comprises 415 residues: Exodeoxyribonuclease 7 large subunit (415 aa).

It belongs to the XseA family. As to quaternary structure, heterooligomer composed of large and small subunits.

The protein resides in the cytoplasm. It carries out the reaction Exonucleolytic cleavage in either 5'- to 3'- or 3'- to 5'-direction to yield nucleoside 5'-phosphates.. Its function is as follows. Bidirectionally degrades single-stranded DNA into large acid-insoluble oligonucleotides, which are then degraded further into small acid-soluble oligonucleotides. This Mycobacterium bovis (strain ATCC BAA-935 / AF2122/97) protein is Exodeoxyribonuclease 7 large subunit.